The sequence spans 474 residues: UDP-N-acetylmuramate--L-alanine ligase (474 aa).

116-122 is a binding site for ATP; the sequence is GTHGKTT.

This sequence belongs to the MurCDEF family.

It localises to the cytoplasm. The enzyme catalyses UDP-N-acetyl-alpha-D-muramate + L-alanine + ATP = UDP-N-acetyl-alpha-D-muramoyl-L-alanine + ADP + phosphate + H(+). The protein operates within cell wall biogenesis; peptidoglycan biosynthesis. In terms of biological role, cell wall formation. This is UDP-N-acetylmuramate--L-alanine ligase from Hyphomonas neptunium (strain ATCC 15444).